Here is a 191-residue protein sequence, read N- to C-terminus: LHFPL tetraspan subfamily member 7 protein (191 aa).

4 helical membrane passes run 6 to 26 (MGSL…FSLM), 72 to 92 (IAAV…VLVL), 112 to 132 (YAQI…PFNL), and 154 to 174 (LGWG…LPFI).

This sequence belongs to the TMEM211 family.

The protein resides in the membrane. The protein is LHFPL tetraspan subfamily member 7 protein (lhfpl7) of Xenopus tropicalis (Western clawed frog).